The sequence spans 325 residues: Pyruvate dehydrogenase E1 component subunit beta (325 aa).

A thiamine diphosphate-binding site is contributed by Glu60.

In terms of assembly, heterodimer of an alpha and a beta chain. The cofactor is thiamine diphosphate.

Its subcellular location is the cytoplasm. It is found in the secreted. The catalysed reaction is N(6)-[(R)-lipoyl]-L-lysyl-[protein] + pyruvate + H(+) = N(6)-[(R)-S(8)-acetyldihydrolipoyl]-L-lysyl-[protein] + CO2. Activity of the E1 module is inhibited by the pyruvate dehydrogenase inhibitor PdhI. Functionally, the pyruvate dehydrogenase complex catalyzes the overall conversion of pyruvate to acetyl-CoA and CO(2). It contains multiple copies of three enzymatic components: pyruvate dehydrogenase (E1), dihydrolipoamide acetyltransferase (E2) and lipoamide dehydrogenase (E3). Its function is as follows. The B.subtilis PDH complex also possesses branched-chain 2-oxoacid dehydrogenase (BCDH) activity. In Bacillus subtilis (strain 168), this protein is Pyruvate dehydrogenase E1 component subunit beta.